The primary structure comprises 671 residues: MDFKYSRELKLESLDALNLTEGIPLRVNENIDLEFRGIERAHSDWERYVGKLNGFHGGRGPQFGFVSACIPECLPERMETVSYANEFAFLHDDMTDAASKDQVNGLNDDLLGGLDFTTEARSSASGKQQMQAKLLLEMLSIDRERTMVTIKAWADFMRGAAGRDHHRGFSSLDEYIPYRCADCGEKFWFGLVTFAMALSIPEQELELVQRLAQNAYLAAGLTNDLYSYEKEQLVAERSGTGQVFNAIAVIMQEHSVSISEAEDICRGRIREYAAKYVRDVADLRAKNELSRDSLAYLETGLYGISGSTAWNLDCPRYQVSTFVDFKTPEDETAKEEFIHVPEQKQFVGDGSIEDQTTEGNQEIVLRKLPQMSTEVIEAPYTYVKSLPSKGVRQRAMHAINTWLQVPMAKMKLIEDVVERIHNSSLMLDDIEDSSPLRREYPAAHMIFGVPQTINSANYELVLALNAAHQLGNPTCLQIFIEELQRLNVGQSYDLYWTHNMITPSMNDYLRMIDSKTGGLFSMLSRLMVACSPRTVSADFDSLSRLVGRFFQIRDDYQNLVSAEYSKQKGFCEDLDEGKYSLPLIHALETCVNSDRDMLRSLLVQRRVAGHLTFEQKKLVLQIMQRCESLEFTKSQLCVLQTRIQEEIDKLVAEFGDENFSLRLLVELLVVG.

D92 contacts Mg(2+). Residues 92–96 (DDMTD) carry the DDXXD 1 motif. Positions 223 to 231 (NDLYSYEKE) match the NSE/DTE motif. Residues K389, R392, and H421 each coordinate isopentenyl diphosphate. Mg(2+)-binding residues include D428 and D432. Residues 428 to 432 (DDIED) carry the DDXXD 2 motif. Position 437 (R437) interacts with dimethylallyl diphosphate. R438 serves as a coordination point for isopentenyl diphosphate. Positions 515, 516, 551, 558, 568, and 578 each coordinate dimethylallyl diphosphate.

The protein in the N-terminal section; belongs to the terpene synthase family. In the C-terminal section; belongs to the FPP/GGPP synthase family. Requires Mg(2+) as cofactor.

It catalyses the reaction 5 isopentenyl diphosphate + dimethylallyl diphosphate = all-trans-hexaprenyl diphosphate + 5 diphosphate. The catalysed reaction is all-trans-hexaprenyl diphosphate = talaropentaene + diphosphate. In terms of biological role, bifunctional terpene synthase that converts dimethylallyl diphosphate (DMAPP) and isopentenyl diphosphate (IPP) into talaropentaene as a single product. The C-terminal prenyltransferase (PT) domain of MpMS catalyzes formation of hexaprenyl diphosphate (HexPP), whereas the N-terminal terpene cyclase (TC) domain catalyzes the cyclization of HexPP to talaropentaene. This Talaromyces verruculosus (Penicillium verruculosum) protein is Talaropentaene synthase.